Here is a 264-residue protein sequence, read N- to C-terminus: uncharacterized protein (264 aa).

An NADP(+)-binding site is contributed by 13 to 20 (TGSTSGIG). S141 is a binding site for substrate. Residue Y154 is the Proton acceptor of the active site.

This sequence belongs to the short-chain dehydrogenases/reductases (SDR) family.

This is an uncharacterized protein from Bacillus subtilis (strain 168).